Here is a 171-residue protein sequence, read N- to C-terminus: Antimicrobial protein CAP18 (171 aa).

The signal sequence occupies residues 1–29; the sequence is METHKHGPSLAWWSLLLLLLGLLMPPAIA. Cystine bridges form between C85–C96 and C107–C124.

This sequence belongs to the cathelicidin family. Neutrophils.

It is found in the secreted. In terms of biological role, CAP18 binds to the lipid A moiety of bacterial lipopolysaccharides (LPS), a glycolipid present in the outer membrane of all Gram-negative bacteria. Has antibiotic activity. In Oryctolagus cuniculus (Rabbit), this protein is Antimicrobial protein CAP18 (CAP18).